The following is a 370-amino-acid chain: Cytochrome b (370 aa).

The next 4 helical transmembrane spans lie at 30–50 (FGSMLGMVLVFQIVTGTFLAF), 74–96 (WIFRIFHFNGASLFFIFLYLHIF), 109–129 (VWMSGLTIYLLVMMEAFMGYV), and 175–195 (FFVLHFLLPWAILFIVLGHLI). 2 residues coordinate heme b: histidine 80 and histidine 94. Heme b-binding residues include histidine 179 and histidine 193. Residue histidine 198 participates in a ubiquinone binding. 4 helical membrane-spanning segments follow: residues 221–240 (YIGKDAYNIVVWLVFIVLSL), 284–304 (VLGVIALLMSIVTFYFFALVN), 316–336 (FLVFLFIISSVILSWLGQCMV), and 342–362 (VLSPLFSVIYFGLAYLLLGIF).

The protein belongs to the cytochrome b family. As to quaternary structure, the main subunits of complex b-c1 are: cytochrome b, cytochrome c1 and the Rieske protein. Requires heme b as cofactor.

The protein localises to the mitochondrion inner membrane. Component of the ubiquinol-cytochrome c reductase complex (complex III or cytochrome b-c1 complex) that is part of the mitochondrial respiratory chain. The b-c1 complex mediates electron transfer from ubiquinol to cytochrome c. Contributes to the generation of a proton gradient across the mitochondrial membrane that is then used for ATP synthesis. The sequence is that of Cytochrome b (ctb-1) from Caenorhabditis briggsae.